Reading from the N-terminus, the 438-residue chain is Aminopeptidase E (438 aa).

Catalysis depends on residues Cys70, His362, and Asn383.

This sequence belongs to the peptidase C1 family.

Its subcellular location is the cytoplasm. Its function is as follows. Can hydrolyze internal peptide bonds in Met-enkephalin and bradykinin; however, hydrolysis of alpha-, beta-, and kappa-caseins is not detected. The polypeptide is Aminopeptidase E (pepE) (Lactobacillus helveticus (Lactobacillus suntoryeus)).